The primary structure comprises 220 residues: Small ribosomal subunit protein uS3 (220 aa).

A KH type-2 domain is found at 38 to 106 (IRKYVKGRLK…RVHININEIK (69 aa)).

The protein belongs to the universal ribosomal protein uS3 family. In terms of assembly, part of the 30S ribosomal subunit. Forms a tight complex with proteins S10 and S14.

Its function is as follows. Binds the lower part of the 30S subunit head. Binds mRNA in the 70S ribosome, positioning it for translation. This chain is Small ribosomal subunit protein uS3, found in Brevibacillus brevis (strain 47 / JCM 6285 / NBRC 100599).